Here is a 200-residue protein sequence, read N- to C-terminus: Holliday junction branch migration complex subunit RuvA (200 aa).

A domain I region spans residues 1-63 (MYAYIKGTLS…EDAQLLYGFI (63 aa)). Residues 64-142 (NEEEKEMFLS…ITEENSDDLL (79 aa)) form a domain II region. The flexible linker stretch occupies residues 143–149 (QTQVNGN). The interval 150 to 200 (EQNQIISEALLALQALGYSKRELTKVEKSLNKHNVNSVDEAVKIGLQTLVS) is domain III.

Belongs to the RuvA family. As to quaternary structure, homotetramer. Forms an RuvA(8)-RuvB(12)-Holliday junction (HJ) complex. HJ DNA is sandwiched between 2 RuvA tetramers; dsDNA enters through RuvA and exits via RuvB. An RuvB hexamer assembles on each DNA strand where it exits the tetramer. Each RuvB hexamer is contacted by two RuvA subunits (via domain III) on 2 adjacent RuvB subunits; this complex drives branch migration. In the full resolvosome a probable DNA-RuvA(4)-RuvB(12)-RuvC(2) complex forms which resolves the HJ.

It is found in the cytoplasm. Functionally, the RuvA-RuvB-RuvC complex processes Holliday junction (HJ) DNA during genetic recombination and DNA repair, while the RuvA-RuvB complex plays an important role in the rescue of blocked DNA replication forks via replication fork reversal (RFR). RuvA specifically binds to HJ cruciform DNA, conferring on it an open structure. The RuvB hexamer acts as an ATP-dependent pump, pulling dsDNA into and through the RuvAB complex. HJ branch migration allows RuvC to scan DNA until it finds its consensus sequence, where it cleaves and resolves the cruciform DNA. This chain is Holliday junction branch migration complex subunit RuvA, found in Staphylococcus epidermidis (strain ATCC 35984 / DSM 28319 / BCRC 17069 / CCUG 31568 / BM 3577 / RP62A).